The primary structure comprises 226 residues: UPF0319 protein YpAngola_A3206 (226 aa).

The first 20 residues, 1–20 (MKLGLVAGMLAVCFSFSSVA), serve as a signal peptide directing secretion.

The protein belongs to the UPF0319 family.

This is UPF0319 protein YpAngola_A3206 from Yersinia pestis bv. Antiqua (strain Angola).